Here is a 640-residue protein sequence, read N- to C-terminus: Acid beta-fructofuranosidase 2, vacuolar (640 aa).

The tract at residues 1–22 (MDTNTTSYTPLPGDPFLSGPPE) is disordered. Residues 1–29 (MDTNTTSYTPLPGDPFLSGPPETPRRPLK) lie on the Cytoplasmic side of the membrane. The propeptide at 1-78 (MDTNTTSYTP…HPQSTTNTML (78 aa)) is removed in mature form. Residues 30–49 (GFAVIFASVIFLMSLVALII) traverse the membrane as a helical segment. The Lumenal portion of the chain corresponds to 50–616 (HQGPQQPPDV…FSPDAASHSS (567 aa)). Substrate is bound by residues 93–96 (WMND), glutamine 112, tryptophan 120, 155–156 (WT), 219–220 (RD), glutamate 274, and aspartate 307. The active site involves aspartate 96. A disulfide bond links cysteine 464 and cysteine 512. Residues 617–639 (FTPVTVFIKFIVPFGIFLTLYFV) traverse the membrane as a helical segment. A topological domain (cytoplasmic) is located at residue arginine 640.

It belongs to the glycosyl hydrolase 32 family. In terms of tissue distribution, expressed in buds, stems, roots and leaves.

It is found in the membrane. The protein localises to the vacuole membrane. The catalysed reaction is Hydrolysis of terminal non-reducing beta-D-fructofuranoside residues in beta-D-fructofuranosides.. In terms of biological role, vacuolar invertase. The sequence is that of Acid beta-fructofuranosidase 2, vacuolar from Rosa hybrid cultivar.